The primary structure comprises 620 residues: Probably inactive leucine-rich repeat receptor-like protein kinase At5g48380 (620 aa).

Positions 1–27 (MMMGRLVFVIWLYNCLCLLLLSSLVDA) are cleaved as a signal peptide. Residues 28–228 (DQANIDCLRT…SASSSRGKVV (201 aa)) are Extracellular-facing. Asparagine 56, asparagine 111, asparagine 119, and asparagine 147 each carry an N-linked (GlcNAc...) asparagine glycan. LRR repeat units follow at residues 101 to 124 (DLTGLDLSRNNFSGPLPANISTLI), 126 to 148 (LVTILDLSYNSFSGEIPMLISNI), 150 to 172 (FLNTLMLQHNQFTGTLPPQLAQL), and 174 to 196 (RLKTFSVSDNRLVGPIPNFNQTL). An N-linked (GlcNAc...) asparagine glycan is attached at asparagine 193. Residues 229-249 (IIAAVGGLTAAALVVGVVLFF) form a helical membrane-spanning segment. The Cytoplasmic segment spans residues 250–620 (YFRKLGAVRK…DFIEELIVAR (371 aa)). Phosphothreonine is present on threonine 300. A Protein kinase domain is found at 303–596 (FKKDNIIATG…RAIGESYNFT (294 aa)). ATP is bound by residues 309 to 317 (IATGRTGTM) and lysine 331. Threonine 463 bears the Phosphothreonine mark. Tyrosine 479 carries the phosphotyrosine modification. Residue threonine 482 is modified to Phosphothreonine.

It belongs to the protein kinase superfamily. Ser/Thr protein kinase family.

It localises to the cell membrane. This is Probably inactive leucine-rich repeat receptor-like protein kinase At5g48380 from Arabidopsis thaliana (Mouse-ear cress).